Consider the following 92-residue polypeptide: Putative protein IntG (92 aa).

It belongs to the 'phage' integrase family.

This is Putative protein IntG (intG) from Escherichia coli (strain K12).